The primary structure comprises 200 residues: Ras-related protein Rab-10 (200 aa).

GTP-binding residues include Ser-18, Gly-19, Val-20, Gly-21, Lys-22, Thr-23, Cys-24, Asn-35, Thr-36, Ser-40, and Thr-41. Thr-23 serves as a coordination point for Mg(2+). 2 consecutive short sequence motifs (switch) follow at residues Asp-32–Phe-46 and Asp-64–Gly-81. Thr-41 and Asp-64 together coordinate Mg(2+). Gly-67 lines the GTP pocket. Thr-73 is subject to Phosphothreonine; by LRRK2. Position 102 is an N6-acetyllysine (Lys-102). Residue Lys-102 forms a Glycyl lysine isopeptide (Lys-Gly) (interchain with G-Cter in ubiquitin) linkage. Asn-122, Lys-123, Asp-125, and Met-126 together coordinate GTP. Residue Lys-136 forms a Glycyl lysine isopeptide (Lys-Gly) (interchain with G-Cter in ubiquitin) linkage. Residues Ser-152, Ala-153, and Lys-154 each contribute to the GTP site. A Glycyl lysine isopeptide (Lys-Gly) (interchain with G-Cter in ubiquitin) cross-link involves residue Lys-154. S-geranylgeranyl cysteine attachment occurs at residues Cys-199 and Cys-200.

Belongs to the small GTPase superfamily. Rab family. In terms of assembly, interacts with MYO5A; mediates the transport to the plasma membrane of SLC2A4/GLUT4 storage vesicles. Interacts with GDI1 and with GDI2; negatively regulates RAB10 association with membranes and activation. Interacts (GDP-bound form) with LLGL1; the interaction is direct and promotes RAB10 association with membranes and activation through competition with the Rab inhibitor GDI1. Interacts with EXOC4; probably associates with the exocyst. Interacts (GTP-bound form) with MICALCL, MICAL1, MICAL3, EHBP1 and EHBP1L1; at least in case of MICAL1 two molecules of RAB10 can bind to one molecule of MICAL1. Interacts with TBC1D13. Interacts with SEC16A. Interacts with CHM and CHML. Interacts with LRRK2; interaction facilitates phosphorylation of Thr-73. Interacts (when phosphorylated on Thr-73) with RILPL1 and RILPL2. Interacts with TBC1D21. Interacts with MARCKS. The cofactor is Mg(2+). Post-translationally, ubiquitinated upon Legionella pneumophila infection. Ubiquitination does not lead to proteasomal degradation. In terms of processing, phosphorylation of Thr-73 in the switch II region by LRRK2 prevents the association of dRAB regulatory proteins, including CHM, CHML and RAB GDP dissociation inhibitors GDI1 and GDI2. Phosphorylation of Thr-73 by LRRK2 is stimulated by RAB29 and RAB32. Phosphorylation by LRRK2 is required for localization to stressed lysosomes. Expressed in the hippocampus. Expressed in neutrophils (at protein level). Expressed in the testis (at protein level).

It localises to the cytoplasmic vesicle membrane. It is found in the golgi apparatus membrane. The protein localises to the golgi apparatus. The protein resides in the trans-Golgi network membrane. Its subcellular location is the endosome membrane. It localises to the recycling endosome membrane. It is found in the cytoplasmic vesicle. The protein localises to the phagosome membrane. The protein resides in the cytoplasm. Its subcellular location is the cytoskeleton. It localises to the cilium basal body. It is found in the endoplasmic reticulum membrane. The protein localises to the perinuclear region. The protein resides in the lysosome. It catalyses the reaction GTP + H2O = GDP + phosphate + H(+). Its activity is regulated as follows. Regulated by guanine nucleotide exchange factors (GEFs) DENND4C and RABIF which promote the exchange of bound GDP for free GTP. Regulated by GTPase activating proteins (GAPs) including TBC1D21 which increase the GTP hydrolysis activity. Inhibited by GDP dissociation inhibitors GDI1 and GDI2 which prevent Rab-GDP dissociation. Functionally, the small GTPases Rab are key regulators of intracellular membrane trafficking, from the formation of transport vesicles to their fusion with membranes. Rabs cycle between an inactive GDP-bound form and an active GTP-bound form that is able to recruit to membranes different set of downstream effectors directly responsible for vesicle formation, movement, tethering and fusion. That Rab is mainly involved in the biosynthetic transport of proteins from the Golgi to the plasma membrane. Regulates, for instance, SLC2A4/GLUT4 glucose transporter-enriched vesicles delivery to the plasma membrane. In parallel, it regulates the transport of TLR4, a toll-like receptor to the plasma membrane and therefore may be important for innate immune response. Also plays a specific role in asymmetric protein transport to the plasma membrane. In neurons, it is involved in axonogenesis through regulation of vesicular membrane trafficking toward the axonal plasma membrane. In epithelial cells, it regulates transport from the Golgi to the basolateral membrane. May play a role in the basolateral recycling pathway and in phagosome maturation. May play a role in endoplasmic reticulum dynamics and morphology controlling tubulation along microtubules and tubules fusion. Together with LRRK2, RAB8A, and RILPL1, it regulates ciliogenesis. When phosphorylated by LRRK2 on Thr-73, binds RILPL1 and inhibits ciliogenesis. Participates in the export of a subset of neosynthesized proteins through a Rab8-Rab10-Rab11-dependent endososomal export route. Targeted to and stabilized on stressed lysosomes through LRRK2 phosphorylation where it promotes the extracellular release of lysosomal content through EHBP1 and EHNP1L1 effector proteins. In terms of biological role, (Microbial infection) Upon Legionella pneumophila infection promotes endoplasmic reticulum recruitment and bacterial replication. Plays a role in remodeling the Legionella-containing vacuole (LCV) into an endoplasmic reticulum-like vacuole. The chain is Ras-related protein Rab-10 from Homo sapiens (Human).